Reading from the N-terminus, the 707-residue chain is UvrABC system protein C (707 aa).

The 81-residue stretch at 14–94 folds into the GIY-YIG domain; the sequence is AEPGCYLMKD…IKKHRPRFNV (81 aa). In terms of domain architecture, UVR spans 206-241; sequence GELVERLRGRMAGAAEGLRFEEAARLRDQLQAVERS. A disordered region spans residues 654-684; it reads PDAPPAAADEPSGAPEGTPAGGPAEAIPDAA. Low complexity predominate over residues 658-684; it reads PAAADEPSGAPEGTPAGGPAEAIPDAA.

Belongs to the UvrC family. Interacts with UvrB in an incision complex.

It localises to the cytoplasm. Functionally, the UvrABC repair system catalyzes the recognition and processing of DNA lesions. UvrC both incises the 5' and 3' sides of the lesion. The N-terminal half is responsible for the 3' incision and the C-terminal half is responsible for the 5' incision. The chain is UvrABC system protein C from Anaeromyxobacter dehalogenans (strain 2CP-C).